An 823-amino-acid chain; its full sequence is Endoplasmin homolog (823 aa).

The N-terminal stretch at 1–23 is a signal peptide; that stretch reads MRKRTLVSVLFLFSLLFLLPDQG. Positions 29–60 are disordered; sequence NAEESSDDVTDPPKVEEKIGGHGGLSTDSDVV. Positions 39–48 are enriched in basic and acidic residues; that stretch reads DPPKVEEKIG. ATP is bound by residues Glu106, Asn110, Asp154, Met159, Asn167, Lys173, 174–175, 194–199, Phe199, and Thr246; these read SG and QFGVGF. Asn110 carries N-linked (GlcNAc...) asparagine glycosylation. The disordered stretch occupies residues 289-328; the sequence is ETEVPVEEDESADEETETTSTEEEKEEDAEEEDGEKKQKT. Residues 290 to 321 are compositionally biased toward acidic residues; that stretch reads TEVPVEEDESADEETETTSTEEEKEEDAEEED. Asn452 and Asn620 each carry an N-linked (GlcNAc...) asparagine glycan. Residues 777–792 are compositionally biased toward acidic residues; sequence VADEEIEAAEEPETSE. The tract at residues 777-823 is disordered; the sequence is VADEEIEAAEEPETSEATETKSDDLAGGLNIEAEPVEQQEENTKDEL. Residues 820–823 carry the Prevents secretion from ER motif; the sequence is KDEL.

It belongs to the heat shock protein 90 family. As to quaternary structure, interacts with FKBP42. Interacts with P23-1. As to expression, ubiquitous.

The protein localises to the endoplasmic reticulum lumen. May have a molecular chaperone role in the processing of secreted materials. Required for shoot apical meristem (SAM), root apical meristem (RAM) and floral meristem (FM) formation, probably by regulating the folding of CLAVATA proteins (CLVs). Also involved in pollen tube elongation. Involved in resistance to tunicamycin- or high calcium-induced ER stresses. Possesses ATPase activity. The chain is Endoplasmin homolog from Arabidopsis thaliana (Mouse-ear cress).